Here is a 308-residue protein sequence, read N- to C-terminus: UDP-N-acetylenolpyruvoylglucosamine reductase (308 aa).

The region spanning 22–185 is the FAD-binding PCMH-type domain; the sequence is RVGGPADWLF…TEATFRAEAG (164 aa). The active site involves arginine 165. The segment covering 197–211 has biased composition (basic and acidic residues); sequence QIARRDSSQPTKERS. Residues 197-228 are disordered; the sequence is QIARRDSSQPTKERSAGSTFRNPAGFSSTGRA. Positions 212-226 are enriched in polar residues; it reads AGSTFRNPAGFSSTG. The active-site Proton donor is the serine 214. Residue glutamate 296 is part of the active site.

Belongs to the MurB family. FAD serves as cofactor.

It localises to the cytoplasm. The enzyme catalyses UDP-N-acetyl-alpha-D-muramate + NADP(+) = UDP-N-acetyl-3-O-(1-carboxyvinyl)-alpha-D-glucosamine + NADPH + H(+). Its pathway is cell wall biogenesis; peptidoglycan biosynthesis. Cell wall formation. The sequence is that of UDP-N-acetylenolpyruvoylglucosamine reductase from Cereibacter sphaeroides (strain ATCC 17023 / DSM 158 / JCM 6121 / CCUG 31486 / LMG 2827 / NBRC 12203 / NCIMB 8253 / ATH 2.4.1.) (Rhodobacter sphaeroides).